The following is a 450-amino-acid chain: Phosphoglucosamine mutase (450 aa).

Residue Ser101 is the Phosphoserine intermediate of the active site. Residues Ser101, Asp241, Asp243, and Asp245 each contribute to the Mg(2+) site. Ser101 bears the Phosphoserine mark.

Belongs to the phosphohexose mutase family. Mg(2+) is required as a cofactor. In terms of processing, activated by phosphorylation.

It catalyses the reaction alpha-D-glucosamine 1-phosphate = D-glucosamine 6-phosphate. Its function is as follows. Catalyzes the conversion of glucosamine-6-phosphate to glucosamine-1-phosphate. This is Phosphoglucosamine mutase from Listeria monocytogenes serotype 4b (strain F2365).